A 144-amino-acid polypeptide reads, in one-letter code: Peptidyl-Asp metalloendopeptidase (144 aa).

H64 contributes to the Zn(2+) binding site. E65 is an active-site residue. A Zn(2+)-binding site is contributed by H68.

Belongs to the peptidase M72 family. It depends on Zn(2+) as a cofactor.

It catalyses the reaction Cleavage of Xaa-|-Asp, Xaa-|-Glu and Xaa-|-cysteic acid bonds.. Metalloprotease, specifically cleaves on the N-terminal side of aspartyl, glutamyl and cysteic acid residues. The chain is Peptidyl-Asp metalloendopeptidase from Pseudomonas fragi.